A 313-amino-acid polypeptide reads, in one-letter code: Porphobilinogen deaminase (313 aa).

Cys242 carries the S-(dipyrrolylmethanemethyl)cysteine modification.

It belongs to the HMBS family. As to quaternary structure, monomer. It depends on dipyrromethane as a cofactor.

It catalyses the reaction 4 porphobilinogen + H2O = hydroxymethylbilane + 4 NH4(+). The protein operates within porphyrin-containing compound metabolism; protoporphyrin-IX biosynthesis; coproporphyrinogen-III from 5-aminolevulinate: step 2/4. Tetrapolymerization of the monopyrrole PBG into the hydroxymethylbilane pre-uroporphyrinogen in several discrete steps. This Enterobacter sp. (strain 638) protein is Porphobilinogen deaminase.